Here is a 286-residue protein sequence, read N- to C-terminus: Phosphatidylglycerol--prolipoprotein diacylglyceryl transferase (286 aa).

A run of 7 helical transmembrane segments spans residues 29–49 (IHWY…VGTY), 66–86 (LVFY…VFFY), 101–121 (VWEG…AMML), 130–150 (FLDL…LGRI), 181–201 (PSQL…LFWF), 209–229 (AAVA…VEFV), and 250–270 (LSLP…RHPA). Arg-149 is a binding site for a 1,2-diacyl-sn-glycero-3-phospho-(1'-sn-glycerol).

It belongs to the Lgt family.

The protein resides in the cell inner membrane. It catalyses the reaction L-cysteinyl-[prolipoprotein] + a 1,2-diacyl-sn-glycero-3-phospho-(1'-sn-glycerol) = an S-1,2-diacyl-sn-glyceryl-L-cysteinyl-[prolipoprotein] + sn-glycerol 1-phosphate + H(+). Its pathway is protein modification; lipoprotein biosynthesis (diacylglyceryl transfer). Catalyzes the transfer of the diacylglyceryl group from phosphatidylglycerol to the sulfhydryl group of the N-terminal cysteine of a prolipoprotein, the first step in the formation of mature lipoproteins. This Teredinibacter turnerae (strain ATCC 39867 / T7901) protein is Phosphatidylglycerol--prolipoprotein diacylglyceryl transferase.